The sequence spans 176 residues: ATP-dependent protease subunit HslV (176 aa).

The active site involves Thr-5. 3 residues coordinate Na(+): Ala-161, Cys-164, and Thr-167.

Belongs to the peptidase T1B family. HslV subfamily. In terms of assembly, a double ring-shaped homohexamer of HslV is capped on each side by a ring-shaped HslU homohexamer. The assembly of the HslU/HslV complex is dependent on binding of ATP.

It is found in the cytoplasm. The enzyme catalyses ATP-dependent cleavage of peptide bonds with broad specificity.. Allosterically activated by HslU binding. In terms of biological role, protease subunit of a proteasome-like degradation complex believed to be a general protein degrading machinery. In Caldicellulosiruptor bescii (strain ATCC BAA-1888 / DSM 6725 / KCTC 15123 / Z-1320) (Anaerocellum thermophilum), this protein is ATP-dependent protease subunit HslV.